The chain runs to 274 residues: 2,3,4,5-tetrahydropyridine-2,6-dicarboxylate N-succinyltransferase (274 aa).

2 residues coordinate substrate: arginine 104 and aspartate 141.

It belongs to the transferase hexapeptide repeat family. Homotrimer.

It is found in the cytoplasm. It carries out the reaction (S)-2,3,4,5-tetrahydrodipicolinate + succinyl-CoA + H2O = (S)-2-succinylamino-6-oxoheptanedioate + CoA. Its pathway is amino-acid biosynthesis; L-lysine biosynthesis via DAP pathway; LL-2,6-diaminopimelate from (S)-tetrahydrodipicolinate (succinylase route): step 1/3. The chain is 2,3,4,5-tetrahydropyridine-2,6-dicarboxylate N-succinyltransferase from Sodalis glossinidius (strain morsitans).